A 192-amino-acid polypeptide reads, in one-letter code: NADH-quinone oxidoreductase subunit B (192 aa).

[4Fe-4S] cluster contacts are provided by Cys-71, Cys-72, Cys-136, and Cys-166.

It belongs to the complex I 20 kDa subunit family. As to quaternary structure, NDH-1 is composed of 14 different subunits. Subunits NuoB, C, D, E, F, and G constitute the peripheral sector of the complex. Requires [4Fe-4S] cluster as cofactor.

Its subcellular location is the cell inner membrane. It carries out the reaction a quinone + NADH + 5 H(+)(in) = a quinol + NAD(+) + 4 H(+)(out). Functionally, NDH-1 shuttles electrons from NADH, via FMN and iron-sulfur (Fe-S) centers, to quinones in the respiratory chain. Couples the redox reaction to proton translocation (for every two electrons transferred, four hydrogen ions are translocated across the cytoplasmic membrane), and thus conserves the redox energy in a proton gradient. The protein is NADH-quinone oxidoreductase subunit B of Azorhizobium caulinodans (strain ATCC 43989 / DSM 5975 / JCM 20966 / LMG 6465 / NBRC 14845 / NCIMB 13405 / ORS 571).